Reading from the N-terminus, the 200-residue chain is Dual-action ribosomal maturation protein DarP (200 aa).

Disordered stretches follow at residues 1 to 25 (MTRKTRIQPIEHAAEVDDNGYDRPS) and 177 to 200 (TASGTPGGDDEAADEAGDDHDDEA). The span at 12-25 (HAAEVDDNGYDRPS) shows a compositional bias: basic and acidic residues. Acidic residues predominate over residues 184–200 (GDDEAADEAGDDHDDEA).

It belongs to the DarP family.

It localises to the cytoplasm. Its function is as follows. Member of a network of 50S ribosomal subunit biogenesis factors which assembles along the 30S-50S interface, preventing incorrect 23S rRNA structures from forming. Promotes peptidyl transferase center (PTC) maturation. The chain is Dual-action ribosomal maturation protein DarP from Burkholderia ambifaria (strain MC40-6).